A 195-amino-acid polypeptide reads, in one-letter code: CDP-diacylglycerol--glycerol-3-phosphate 3-phosphatidyltransferase (195 aa).

Transmembrane regions (helical) follow at residues 7-24 (ITVL…LFYL), 60-81 (FGAF…VLLV), 134-150 (MLAL…FTFW), and 157-173 (FLLI…LQYL).

The protein belongs to the CDP-alcohol phosphatidyltransferase class-I family.

The protein resides in the cell membrane. It catalyses the reaction a CDP-1,2-diacyl-sn-glycerol + sn-glycerol 3-phosphate = a 1,2-diacyl-sn-glycero-3-phospho-(1'-sn-glycero-3'-phosphate) + CMP + H(+). The protein operates within phospholipid metabolism; phosphatidylglycerol biosynthesis; phosphatidylglycerol from CDP-diacylglycerol: step 1/2. Its function is as follows. This protein catalyzes the committed step to the synthesis of the acidic phospholipids. This is CDP-diacylglycerol--glycerol-3-phosphate 3-phosphatidyltransferase (pgsA) from Pseudomonas fluorescens.